A 46-amino-acid chain; its full sequence is Toxin PhcrTx2 (46 aa).

Intrachain disulfides connect Cys4/Cys40, Cys6/Cys32, and Cys22/Cys41.

It belongs to the sea anemone type 3 (BDS) potassium channel toxin family.

The protein resides in the secreted. It is found in the nematocyst. Neurotoxin that induces paralysis (but not death) to U.thayeri crabs. Partially and reversibly inhibits glutamate-evoked peak currents (IC(50)=4.7 uM) but not voltage-gated potassium channel currents in cultured isolated neurons from the land snail H.aspersa. Weakly inhibits voltage-gated potassium peak currents (IC(50)=6.4 uM) and steady-state currents (IC(50)=8.2 uM) in rat dorsal root ganglion (DRG) neurons. Weakly inhibits voltage-gated sodium currents in rat DRG neurons (IC(50)=0.9 uM). The sequence is that of Toxin PhcrTx2 from Phymanthus crucifer (Red beaded anemone).